The following is a 107-amino-acid chain: Large ribosomal subunit protein uL23 (107 aa).

This sequence belongs to the universal ribosomal protein uL23 family. Part of the 50S ribosomal subunit. Contacts protein L29, and trigger factor when it is bound to the ribosome.

One of the early assembly proteins it binds 23S rRNA. One of the proteins that surrounds the polypeptide exit tunnel on the outside of the ribosome. Forms the main docking site for trigger factor binding to the ribosome. This chain is Large ribosomal subunit protein uL23, found in Rhodopirellula baltica (strain DSM 10527 / NCIMB 13988 / SH1).